The following is a 184-amino-acid chain: Fe/S biogenesis protein NfuA (184 aa).

[4Fe-4S] cluster is bound by residues C142 and C145.

This sequence belongs to the NfuA family. Homodimer. It depends on [4Fe-4S] cluster as a cofactor.

Involved in iron-sulfur cluster biogenesis. Binds a 4Fe-4S cluster, can transfer this cluster to apoproteins, and thereby intervenes in the maturation of Fe/S proteins. Could also act as a scaffold/chaperone for damaged Fe/S proteins. This chain is Fe/S biogenesis protein NfuA, found in Wigglesworthia glossinidia brevipalpis.